Here is a 53-residue protein sequence, read N- to C-terminus: uncharacterized protein (53 aa).

The helical transmembrane segment at 13–35 (FLLHSFTFPIAHCPSFSWASFFF) threads the bilayer.

The protein localises to the membrane. This is an uncharacterized protein from Saccharomyces cerevisiae (strain ATCC 204508 / S288c) (Baker's yeast).